The sequence spans 153 residues: Protein eva-1 homolog A (153 aa).

The helical transmembrane segment at A37–V57 threads the bilayer. Positions K66 to L97 are disordered.

It belongs to the EVA1 family.

The protein resides in the endoplasmic reticulum membrane. It localises to the lysosome membrane. Its function is as follows. Acts as a regulator of programmed cell death, mediating both autophagy and apoptosis. The sequence is that of Protein eva-1 homolog A (Eva1a) from Danio rerio (Zebrafish).